We begin with the raw amino-acid sequence, 242 residues long: ATP synthase subunit a (242 aa).

Helical transmembrane passes span 28–48, 89–109, 128–148, 193–213, and 214–234; these read LHGQ…LLVV, LPFV…GALI, INTT…AGLS, LVVA…AMFL, and GLFT…NYIG.

This sequence belongs to the ATPase A chain family. F-type ATPases have 2 components, CF(1) - the catalytic core - and CF(0) - the membrane proton channel. CF(1) has five subunits: alpha(3), beta(3), gamma(1), delta(1), epsilon(1). CF(0) has four main subunits: a, b, b' and c.

The protein localises to the cellular thylakoid membrane. In terms of biological role, key component of the proton channel; it plays a direct role in the translocation of protons across the membrane. In Synechococcus sp. (strain WH7803), this protein is ATP synthase subunit a.